Reading from the N-terminus, the 84-residue chain is Large ribosomal subunit protein bL31B (84 aa).

This sequence belongs to the bacterial ribosomal protein bL31 family. Type B subfamily. Part of the 50S ribosomal subunit.

This Rhodococcus erythropolis (strain PR4 / NBRC 100887) protein is Large ribosomal subunit protein bL31B.